The following is a 1585-amino-acid chain: Histone acetyltransferase lsy-12 (1585 aa).

2 disordered regions span residues 1–37 (MGKK…ARRE) and 279–491 (GPQH…DDPV). Residues 23 to 37 (PKDRTARPTAAARRE) show a composition bias toward basic and acidic residues. Residues 279-296 (GPQHENVTVSENVLSTES) are compositionally biased toward polar residues. Over residues 302–312 (TETKRLHDSSR) the composition is skewed to basic and acidic residues. Polar residues-rich tracts occupy residues 355 to 364 (LLSNPHSTPV) and 411 to 426 (SRLS…SNDL). Positions 431 to 440 (SAPSSSSAAS) are enriched in low complexity. Basic residues predominate over residues 453–469 (QQRRKGNQSAARSRKIK). A compositionally biased stretch (acidic residues) spans 477–491 (QEDEPMELDSDDDPV). The 287-residue stretch at 544–830 (EQARLPERIH…YDPECLDWVP (287 aa)) folds into the MYST-type HAT domain. A C2HC MYST-type zinc finger spans residues 577 to 602 (LFICEFCFFYARSDEIMQNHAKKCML). At K644 the chain carries N6-acetyllysine; by autocatalysis. 685–689 (SCIMT) provides a ligand contact to acetyl-CoA. The active-site Proton donor/acceptor is the E720. Residues S724 and K815 each contribute to the acetyl-CoA site. Basic and acidic residues-rich tracts occupy residues 844-855 (SKEEIEQDEQRR) and 947-956 (VLDKSNIREE). Disordered stretches follow at residues 844 to 903 (SKEE…LKHE), 927 to 1262 (EENK…IGKS), 1286 to 1373 (ESTA…ASNH), and 1431 to 1507 (HHQF…VHPQ). Residues 977-999 (NKCNNTESEPNPSGRKTSATSSG) are compositionally biased toward polar residues. Residues 1011 to 1022 (TEEEEEDDDPTD) are compositionally biased toward acidic residues. The segment covering 1029–1046 (DDEKPFETSVNKEKNEKS) has biased composition (basic and acidic residues). Residues 1047–1060 (RRGKKVSKKRRSVA) are compositionally biased toward basic residues. Basic and acidic residues-rich tracts occupy residues 1070 to 1081 (VRDRDEPKKAEN) and 1135 to 1151 (DIPK…AYDR). Low complexity predominate over residues 1164–1173 (PTPDSYHSSP). The span at 1185–1194 (LMQAQQNIYQ) shows a compositional bias: polar residues. Positions 1196–1207 (NDCHFAENDSKP) are enriched in basic and acidic residues. Composition is skewed to polar residues over residues 1298-1317 (AGPS…NTTP) and 1324-1333 (HPNSQQQATP). A compositionally biased stretch (low complexity) spans 1482-1493 (QHQQQQPQQPQQ).

Belongs to the MYST (SAS/MOZ) family.

It carries out the reaction L-lysyl-[protein] + acetyl-CoA = N(6)-acetyl-L-lysyl-[protein] + CoA + H(+). Probable histone acetyltransferase. Required to initiate and then maintain lateralized gene expression in the ASE sensory neurons. Involved in determining cell fate in the ASE neurons. The sequence is that of Histone acetyltransferase lsy-12 from Caenorhabditis elegans.